The following is a 177-amino-acid chain: Large ribosomal subunit protein uL6 (177 aa).

Belongs to the universal ribosomal protein uL6 family. As to quaternary structure, part of the 50S ribosomal subunit.

Its function is as follows. This protein binds to the 23S rRNA, and is important in its secondary structure. It is located near the subunit interface in the base of the L7/L12 stalk, and near the tRNA binding site of the peptidyltransferase center. In Rickettsia felis (strain ATCC VR-1525 / URRWXCal2) (Rickettsia azadi), this protein is Large ribosomal subunit protein uL6.